Consider the following 228-residue polypeptide: Auxin-responsive protein IAA16 (228 aa).

The EAR-like (transcriptional repression) signature appears at 19–23 (LSLAL). The segment covering 28–39 (SSSGLQGNTSTA) has biased composition (polar residues). Disordered regions lie at residues 28–57 (SSSGLQGNTSTAADGAKGNDGFKASRPAAP) and 70–90 (NLASSSSSSKPPRGGRDAAAA). In terms of domain architecture, PB1 spans 97-214 (ARFVKVNMDG…RVLRSSDLNA (118 aa)).

It belongs to the Aux/IAA family. In terms of assembly, homodimers and heterodimers. Expressed in roots, flowers and seedlings.

Its subcellular location is the nucleus. Its function is as follows. Aux/IAA proteins are short-lived transcriptional factors that function as repressors of early auxin response genes at low auxin concentrations. The chain is Auxin-responsive protein IAA16 (IAA16) from Oryza sativa subsp. japonica (Rice).